The primary structure comprises 422 residues: Glycine amidinotransferase, mitochondrial (422 aa).

The transit peptide at 1–37 (MLRVRCLRGGSRGAEAAHFIGSRLGRAFTGWVQRSLQ) directs the protein to the mitochondrion. Catalysis depends on residues D253 and H302. C406 acts as the Amidino-cysteine intermediate in catalysis. T416 carries the phosphothreonine modification.

The protein belongs to the amidinotransferase family. In terms of assembly, homodimer.

The protein localises to the mitochondrion inner membrane. The catalysed reaction is L-arginine + glycine = guanidinoacetate + L-ornithine. It functions in the pathway amine and polyamine biosynthesis; creatine biosynthesis; creatine from L-arginine and glycine: step 1/2. Its function is as follows. Catalyzes the biosynthesis of guanidinoacetate, the immediate precursor of creatine. Creatine plays a vital role in energy metabolism in muscle tissues. May play a role in embryonic and central nervous system development. In Gallus gallus (Chicken), this protein is Glycine amidinotransferase, mitochondrial.